A 284-amino-acid polypeptide reads, in one-letter code: MMEQKTVHIGNMPIANDKPFTLFAGMNVLESRDLAMQICEHYVKVTEKLGIPYVFKASFDKANRSSVHSYRGPGMEEGLKIFQELKDTFGVKIITDIHTEAQAQPVADVVDVIQLPAFLARQTDLVEAMAKTGAVINVKKPQFMSPDQVGNIVDKFAECGNENIILCERGSCMGYDNLVVDMLGFGVMKKSSNGSPIIFDVTHALQMRDPSGAASGGRREQTVELAKAGIATGIAGLFLEAHPNPDQARCDGPSALPLDKLEPFLKQMKALDDLIKGFEHIEIK.

It belongs to the KdsA family.

Its subcellular location is the cytoplasm. It carries out the reaction D-arabinose 5-phosphate + phosphoenolpyruvate + H2O = 3-deoxy-alpha-D-manno-2-octulosonate-8-phosphate + phosphate. The protein operates within carbohydrate biosynthesis; 3-deoxy-D-manno-octulosonate biosynthesis; 3-deoxy-D-manno-octulosonate from D-ribulose 5-phosphate: step 2/3. It participates in bacterial outer membrane biogenesis; lipopolysaccharide biosynthesis. This Vibrio atlanticus (strain LGP32) (Vibrio splendidus (strain Mel32)) protein is 2-dehydro-3-deoxyphosphooctonate aldolase.